A 98-amino-acid polypeptide reads, in one-letter code: NADH-ubiquinone oxidoreductase chain 4L (98 aa).

3 consecutive transmembrane segments (helical) span residues 1 to 21, 29 to 49, and 61 to 81; these read MTPTYMNIMLAFTISLLGMLT, SLLCLEGMMMSLFIMTTLIAL, and IILLVFAACEAAVGLALLVSI.

It belongs to the complex I subunit 4L family. In terms of assembly, core subunit of respiratory chain NADH dehydrogenase (Complex I) which is composed of 45 different subunits.

It is found in the mitochondrion inner membrane. The catalysed reaction is a ubiquinone + NADH + 5 H(+)(in) = a ubiquinol + NAD(+) + 4 H(+)(out). Functionally, core subunit of the mitochondrial membrane respiratory chain NADH dehydrogenase (Complex I) which catalyzes electron transfer from NADH through the respiratory chain, using ubiquinone as an electron acceptor. Part of the enzyme membrane arm which is embedded in the lipid bilayer and involved in proton translocation. The polypeptide is NADH-ubiquinone oxidoreductase chain 4L (MT-ND4L) (Macaca pagensis (Mentawai macaque)).